The following is a 594-amino-acid chain: Apolipoprotein N-acyltransferase (594 aa).

Over residues 1–29 (MIPAVTDDDPLEDPLDDDVAPGLDDAEPE) the composition is skewed to acidic residues. The segment at 1–48 (MIPAVTDDDPLEDPLDDDVAPGLDDAEPEPEPRDEHDEPSRPATGSRI) is disordered. Residues 1–67 (MIPAVTDDDP…RFGKGVLDRC (67 aa)) lie on the Cytoplasmic side of the membrane. Basic and acidic residues predominate over residues 30–40 (PEPRDEHDEPS). The helical transmembrane segment at 68-87 (APLSAAIGGGLALWLSFPPI) threads the bilayer. At 88-116 (GWWFTAFPGLALLGWVLTRTATTKAGGFG) the chain is on the extracellular side. A helical membrane pass occupies residues 117–134 (YGVLFGLAFYVPLLPWIS). Residues 135-138 (GLVG) are Cytoplasmic-facing. A helical transmembrane segment spans residues 139–160 (AVPWLALAFAESLFCGLFGLGA). Residues 161–221 (VVVVRLPGWP…IGGAPLVSFA (61 aa)) lie on the Extracellular side of the membrane. A helical membrane pass occupies residues 222 to 239 (VALIGFSLTLLTAQIVWW). Topologically, residues 240-251 (WRHGHKPGVPAP) are cytoplasmic. The chain crosses the membrane as a helical span at residues 252–269 (AVMLPGVAIAASLLVTAL). Residues 270 to 554 (VWPQVRQSGT…TDLTPATKWG (285 aa)) lie on the Extracellular side of the membrane. Residues 287-543 (VTVAAVQGNV…PAYLDNQIRL (257 aa)) form the CN hydrolase domain. The active-site Proton acceptor is glutamate 340. Lysine 405 is a catalytic residue. Residue cysteine 455 is the Nucleophile of the active site. Residues 555 to 572 (PIVQAVLVIAGVAVLLIA) form a helical membrane-spanning segment. At 573-594 (ILHNGRFAPRMLRRRSATTVKR) the chain is on the cytoplasmic side.

It belongs to the CN hydrolase family. Apolipoprotein N-acyltransferase subfamily. Interacts with Ppm1 (AC A0QZ12) upon coexpression in E.coli, which increases the PPM synthase activity of Ppm1.

Its subcellular location is the cell membrane. The enzyme catalyses N-terminal S-1,2-diacyl-sn-glyceryl-L-cysteinyl-[lipoprotein] + a glycerophospholipid = N-acyl-S-1,2-diacyl-sn-glyceryl-L-cysteinyl-[lipoprotein] + a 2-acyl-sn-glycero-3-phospholipid + H(+). It participates in protein modification; lipoprotein biosynthesis (N-acyl transfer). Catalyzes the phospholipid dependent N-acylation of the N-terminal cysteine of apolipoprotein, the last step in lipoprotein maturation. Can transfer a number of fatty acids (C16 and C19, palmitic and probably tuberculostearic acids respectively are shown). Enhances the polyprenol monophosphomannose (PPM) synthase activity of Ppm1 (AC A0QZ12) without itself having PPM synthase catalytic activity. This Mycolicibacterium smegmatis (strain ATCC 700084 / mc(2)155) (Mycobacterium smegmatis) protein is Apolipoprotein N-acyltransferase.